We begin with the raw amino-acid sequence, 353 residues long: Type 2 DNA topoisomerase 6 subunit A (353 aa).

The Topo IIA-type catalytic domain maps to 2 to 138 (NRREIAINKL…LGLMPEEDGA (137 aa)). The active-site O-(5'-phospho-DNA)-tyrosine intermediate is tyrosine 96. 2 residues coordinate Mg(2+): glutamate 186 and aspartate 238.

This sequence belongs to the TOP6A family. As to quaternary structure, homodimer. Heterotetramer of two Top6A and two Top6B chains. Mg(2+) is required as a cofactor.

It catalyses the reaction ATP-dependent breakage, passage and rejoining of double-stranded DNA.. In terms of biological role, relaxes both positive and negative superturns and exhibits a strong decatenase activity. The protein is Type 2 DNA topoisomerase 6 subunit A of Methanothermobacter thermautotrophicus (strain ATCC 29096 / DSM 1053 / JCM 10044 / NBRC 100330 / Delta H) (Methanobacterium thermoautotrophicum).